The sequence spans 481 residues: MITIEQLLDILKKDHNFREVLDADGYHYHYQGFSFERLSYDSRQVDGKTLFFAKGATFKADYLKEAITNGLQLYISEVDYELGIPVVLVTDIKKAMSLIAMAFYGNPQEKLKLLAFTGTKGKTTAAYFAYHMLKESYKPAMFSTMNTTLDGKTFFKSQLTTPESLDLFAMMAECVTNGMTHLIMEVSSQAYLVDRVYGLTFDVGVFLNISPDHIGPIEHPTFEDYFYHKRLLMENSRAVVINSGMDHFSFLADQVADQEHVFYGPLSDNQITTSQAFSFEAKGQLAGHYDIQLIGHFNQENAMAAGLACLRLGASLADIQKGIAKTRVPGRMEVLTMTNHAKVFVDYAHNGDSLEKLLSVVEEHQTGKLMLILGAPGNKGESRRADFGRVIHQHPNLTVILTADDPNFEDPEDISKEIASHIARPVEIISDREQAIQKAMSLCQGAKDAVIIAGKGADAYQIVKGQQVAYAGDLAIAKHYL.

Residue Ser-42 coordinates UDP-N-acetyl-alpha-D-muramoyl-L-alanyl-D-glutamate. Residue 118-124 (GTKGKTT) coordinates ATP. UDP-N-acetyl-alpha-D-muramoyl-L-alanyl-D-glutamate is bound by residues Gln-158, 160–161 (TT), Ser-187, and Arg-195. The residue at position 229 (Lys-229) is an N6-carboxylysine. The short motif at 404 to 407 (DDPN) is the L-lysine recognition motif element.

The protein belongs to the MurCDEF family. MurE subfamily. Post-translationally, carboxylation is probably crucial for Mg(2+) binding and, consequently, for the gamma-phosphate positioning of ATP.

It localises to the cytoplasm. It catalyses the reaction UDP-N-acetyl-alpha-D-muramoyl-L-alanyl-D-glutamate + L-lysine + ATP = UDP-N-acetyl-alpha-D-muramoyl-L-alanyl-gamma-D-glutamyl-L-lysine + ADP + phosphate + H(+). It functions in the pathway cell wall biogenesis; peptidoglycan biosynthesis. In terms of biological role, catalyzes the addition of L-lysine to the nucleotide precursor UDP-N-acetylmuramoyl-L-alanyl-D-glutamate (UMAG) in the biosynthesis of bacterial cell-wall peptidoglycan. The polypeptide is UDP-N-acetylmuramoyl-L-alanyl-D-glutamate--L-lysine ligase (murE) (Streptococcus pyogenes serotype M1).